The following is a 202-amino-acid chain: LexA repressor (202 aa).

Residues 28–48 constitute a DNA-binding region (H-T-H motif); the sequence is RAEIAQRLGFRSPNAAEEHLK. Catalysis depends on for autocatalytic cleavage activity residues serine 119 and lysine 156.

This sequence belongs to the peptidase S24 family. In terms of assembly, homodimer.

The enzyme catalyses Hydrolysis of Ala-|-Gly bond in repressor LexA.. Represses a number of genes involved in the response to DNA damage (SOS response), including recA and lexA. Binds to the 16 bp palindromic sequence 5'-CTGTATATATATACAG-3'. In the presence of single-stranded DNA, RecA interacts with LexA causing an autocatalytic cleavage which disrupts the DNA-binding part of LexA, leading to derepression of the SOS regulon and eventually DNA repair. The chain is LexA repressor from Klebsiella pneumoniae subsp. pneumoniae (strain ATCC 700721 / MGH 78578).